We begin with the raw amino-acid sequence, 122 residues long: Biogenesis of lysosome-related organelles complex 1 subunit BLS1 (122 aa).

A Phosphoserine modification is found at Ser-33.

The protein belongs to the BLOC1S1 family. Component of the biogenesis of lysosome-related organelles complex-1 (BLOC-1) composed of at least BLI1, BLS1, CNL1, KXD1, SNN1 and VAB2.

It localises to the endosome. Functionally, component of the biogenesis of lysosome-related organelles complex-1 (BLOC-1), a complex involved in endosomal cargo sorting. In Saccharomyces cerevisiae (strain YJM789) (Baker's yeast), this protein is Biogenesis of lysosome-related organelles complex 1 subunit BLS1 (BLS1).